A 441-amino-acid polypeptide reads, in one-letter code: Ribosomal protein uS12 methylthiotransferase RimO (441 aa).

Positions 8–118 (PKIGFVSLGC…VLQHVHHYVP (111 aa)) constitute an MTTase N-terminal domain. Positions 17, 53, 82, 150, 154, and 157 each coordinate [4Fe-4S] cluster. One can recognise a Radical SAM core domain in the interval 136 to 373 (LTPRHYAYLK…MQLQQQISAE (238 aa)). The region spanning 376–441 (QEKVGREILV…DEYDLWGSRV (66 aa)) is the TRAM domain.

This sequence belongs to the methylthiotransferase family. RimO subfamily. [4Fe-4S] cluster serves as cofactor.

It localises to the cytoplasm. The catalysed reaction is L-aspartate(89)-[ribosomal protein uS12]-hydrogen + (sulfur carrier)-SH + AH2 + 2 S-adenosyl-L-methionine = 3-methylsulfanyl-L-aspartate(89)-[ribosomal protein uS12]-hydrogen + (sulfur carrier)-H + 5'-deoxyadenosine + L-methionine + A + S-adenosyl-L-homocysteine + 2 H(+). Its function is as follows. Catalyzes the methylthiolation of an aspartic acid residue of ribosomal protein uS12. This Salmonella typhi protein is Ribosomal protein uS12 methylthiotransferase RimO.